A 393-amino-acid polypeptide reads, in one-letter code: Messenger RNA-binding inhibitor of apoptosis 1 (393 aa).

The KH 1-like stretch occupies residues 12–76 (ELYIPQKMKA…EKILRDVWRK (65 aa)). The KH 2-like stretch occupies residues 79 to 157 (VQIMIREAAL…MMIECLTEHF (79 aa)). Residues 259-322 (EKIKQWIPTT…NKEQCQEARN (64 aa)) form a KH 3-like region. Residues 328–393 (MQSHQDKPAS…LTPRKLSPSD (66 aa)) are disordered. Residues 345 to 359 (STPGSPFTSDSSSTT) are compositionally biased toward low complexity.

May interact with wago-4. As to expression, expressed throughout the germline and in oocytes (at protein level).

The protein localises to the cytoplasm. The protein resides in the perinuclear region. RNA-binding protein which binds to its own mRNA and target mRNAs to negatively regulate gene expression to modulate apoptosis and differentiation in the germline. Negatively regulates the expression of the argonaute protein wago-4, and may thus play a role in RNA-mediated gene silencing (RNAi) in the germline. This is Messenger RNA-binding inhibitor of apoptosis 1 from Caenorhabditis elegans.